A 459-amino-acid polypeptide reads, in one-letter code: Alcohol acyl transferase 1 allele GSa (459 aa).

Catalysis depends on proton acceptor residues histidine 164 and asparagine 385.

It belongs to the plant acyltransferase family. In terms of tissue distribution, highly expressed in the cortex and skin of ripe fruit.

The enzyme catalyses butan-1-ol + acetyl-CoA = butyl acetate + CoA. The catalysed reaction is butan-1-ol + butanoyl-CoA = butyl butanoate + CoA. It carries out the reaction butan-1-ol + hexanoyl-CoA = butyl hexanoate + CoA. It catalyses the reaction hexan-1-ol + butanoyl-CoA = hexyl butanoate + CoA. The enzyme catalyses hexan-1-ol + acetyl-CoA = hexyl acetate + CoA. The catalysed reaction is 2-methylbutan-1-ol + butanoyl-CoA = 2-methylbutyl butanoate + CoA. It carries out the reaction ethanol + butanoyl-CoA = ethyl butanoate + CoA. It catalyses the reaction hexanoyl-CoA + ethanol = ethyl hexanoate + CoA. Its function is as follows. Involved in the biosynthesis of volatile esters which confer ripe apple fruit flavor. Alcohol acyl transferase that can use a wide range of alcohols as substrate, including 2-methylbutanol, hexanol and ethanol, to produce esters such as butyl butanoate, butyl hexanoate, hexyl butanoate, ethyl butanoate and ethyl hexanoate and, to some extent, 2-methylbutyl acetate (2MBA), butyl acetate, hexyl acetate and 2-methylbutyl butanoate (2MBB). The chain is Alcohol acyl transferase 1 allele GSa from Malus domestica (Apple).